The chain runs to 82 residues: UPF0180 protein BALH_1248 (82 aa).

This sequence belongs to the UPF0180 family.

In Bacillus thuringiensis (strain Al Hakam), this protein is UPF0180 protein BALH_1248.